We begin with the raw amino-acid sequence, 197 residues long: OV-16 antigen (197 aa).

A signal peptide spans 1-16 (MHCLQVVIAIVLYSFG). N-linked (GlcNAc...) asparagine glycosylation is found at Asn56, Asn61, Asn119, and Asn124.

It belongs to the phosphatidylethanolamine-binding protein family. As to expression, hypodermis, cuticle and uterus.

This chain is OV-16 antigen (OV16), found in Onchocerca volvulus.